The following is a 693-amino-acid chain: Putative transmembrane protein ORF68 (693 aa).

A signal peptide spans 1–17; it reads MILTIILYTLLFSTCSA. Over 18 to 666 the chain is Extracellular; it reads QSVHTMPEAV…WLTKFGTGGG (649 aa). Residues 208-256 are a coiled coil; sequence SKAANNRMDALEDGMKNINTRVTETNLLLEKLSTEVTGALTQLENEIKM. Residues 667–687 form a helical membrane-spanning segment; that stretch reads IAGVTIGLLLPILAIVFSCYV. Residues 688–693 lie on the Cytoplasmic side of the membrane; it reads FCKRRV.

It localises to the host membrane. The protein is Putative transmembrane protein ORF68 of Magallana gigas (Pacific oyster).